A 289-amino-acid chain; its full sequence is Mitochondrial fission regulator 1-like (289 aa).

Threonine 27 bears the Phosphothreonine mark. Serine 38 is subject to Phosphoserine. A Phosphoserine; by AMPK modification is found at serine 100. Phosphoserine is present on residues serine 107, serine 221, and serine 222. At serine 235 the chain carries Phosphoserine; by AMPK. Phosphoserine is present on residues serine 258 and serine 270.

The protein belongs to the MTFR1 family. Phosphorylated by AMPK. Upon stress, phosphorylation at Ser-100 and Ser-235 by AMPK is sufficient to induce mitochondrial fragmentation.

The protein resides in the mitochondrion outer membrane. Functionally, mitochondrial protein required for adaptation of miochondrial dynamics to metabolic changes. Regulates mitochondrial morphology at steady state and mediates AMPK-dependent stress-induced mitochondrial fragmentation via the control of OPA1 levels. The polypeptide is Mitochondrial fission regulator 1-like (Mtfr1l) (Mus musculus (Mouse)).